A 1202-amino-acid polypeptide reads, in one-letter code: Protein HASTY 1 (1202 aa).

Position 1 is an N-acetylmethionine (methionine 1).

This sequence belongs to the exportin family. In terms of assembly, interacts with RAN1. As to expression, expressed in roots, leaves and floral buds.

The protein resides in the nucleus. Its function is as follows. Nucleocytoplasmic transporter involved in the nuclear export of microRNAs (miRNAs). Required for several miRNAs accumulation. Specifically required for miR156 accumulation which targets SPL3, SPL4 and SPL5 transcription factors. Involved in plant development through its role in miRNAs processing. Required for vegetative phase change and vegetative to reproductive phase transition. Functionally dependent on RAN1 binding. Does not seem to be involved in small interfering RNAs (siRNAs) processing. The polypeptide is Protein HASTY 1 (HST1) (Arabidopsis thaliana (Mouse-ear cress)).